Here is a 348-residue protein sequence, read N- to C-terminus: Erlin-1 (348 aa).

The Cytoplasmic segment spans residues 1-7 (MNMTQAR). A helical membrane pass occupies residues 8–28 (VLVAAVVGLVAVLLYASIHKI). The Lumenal portion of the chain corresponds to 29-348 (EEGHLAVYYR…NLIQNKESTG (320 aa)). An N-linked (GlcNAc...) asparagine glycan is attached at Asn108. Lys269 is modified (N6-acetyllysine). Residues 321 to 333 (TGRESSHPSKEAL) are compositionally biased toward basic and acidic residues. Positions 321 to 348 (TGRESSHPSKEALEPSGENLIQNKESTG) are disordered. Polar residues predominate over residues 339-348 (NLIQNKESTG).

The protein belongs to the band 7/mec-2 family. Forms a heteromeric complex with ERLIN2. In complex with ERLIN2, interacts with RNF170. Interacts with AMFR and SYVN1. Post-translationally, deubiquitinated by USP25; leading to stabilization.

It localises to the endoplasmic reticulum membrane. Functionally, component of the ERLIN1/ERLIN2 complex which mediates the endoplasmic reticulum-associated degradation (ERAD) of inositol 1,4,5-trisphosphate receptors (IP3Rs). Involved in regulation of cellular cholesterol homeostasis by regulation the SREBP signaling pathway. Binds cholesterol and may promote ER retention of the SCAP-SREBF complex. This chain is Erlin-1, found in Pongo abelii (Sumatran orangutan).